Here is a 171-residue protein sequence, read N- to C-terminus: MLQTFPRVAKCVRAYSSKPTLGPKFQSLDEIKEYIFKDTISANEFLTQSERAKDRELPVPPRETVLKLLKLSGLPTKGADIERIQRNLSEQISFINILHDTDLDDSLNVKYARLLPRENATLSYGDLIVRANSGKNSELAEISGSWDSTSRASMRKDGYFIVREEFLDNRD.

Belongs to the GatF family. Subunit of the heterotrimeric GatFAB amidotransferase (AdT) complex, composed of A, B and F subunits.

The protein resides in the mitochondrion inner membrane. It carries out the reaction L-glutamyl-tRNA(Gln) + L-glutamine + ATP + H2O = L-glutaminyl-tRNA(Gln) + L-glutamate + ADP + phosphate + H(+). Its function is as follows. Allows the formation of correctly charged Gln-tRNA(Gln) through the transamidation of misacylated Glu-tRNA(Gln) in the mitochondria. The reaction takes place in the presence of glutamine and ATP through an activated gamma-phospho-Glu-tRNA(Gln). Required for proper protein synthesis within the mitochondrion. The polypeptide is Glutamyl-tRNA(Gln) amidotransferase subunit F, mitochondrial (Zygosaccharomyces rouxii (strain ATCC 2623 / CBS 732 / NBRC 1130 / NCYC 568 / NRRL Y-229)).